The sequence spans 803 residues: Translation initiation factor IF-2 (803 aa).

Basic and acidic residues predominate over residues Pro65–Thr75. Residues Pro65–Lys186 are disordered. Positions Asn175 to Leu185 are enriched in basic residues. One can recognise a tr-type G domain in the interval Ile300 to Glu468. The segment at Gly309–Thr316 is G1. Gly309–Thr316 is a binding site for GTP. The tract at residues Gly334 to His338 is G2. The segment at Asp355–Gly358 is G3. GTP-binding positions include Asp355–His359 and Asn409–Asp412. The segment at Asn409–Asp412 is G4. The G5 stretch occupies residues Ser445 to Lys447.

Belongs to the TRAFAC class translation factor GTPase superfamily. Classic translation factor GTPase family. IF-2 subfamily.

It localises to the cytoplasm. Its function is as follows. One of the essential components for the initiation of protein synthesis. Protects formylmethionyl-tRNA from spontaneous hydrolysis and promotes its binding to the 30S ribosomal subunits. Also involved in the hydrolysis of GTP during the formation of the 70S ribosomal complex. In Tropheryma whipplei (strain Twist) (Whipple's bacillus), this protein is Translation initiation factor IF-2.